Here is a 495-residue protein sequence, read N- to C-terminus: Histidine--tRNA ligase (495 aa).

The protein belongs to the class-II aminoacyl-tRNA synthetase family. As to quaternary structure, homodimer.

Its subcellular location is the cytoplasm. The enzyme catalyses tRNA(His) + L-histidine + ATP = L-histidyl-tRNA(His) + AMP + diphosphate + H(+). The polypeptide is Histidine--tRNA ligase (Bartonella henselae (strain ATCC 49882 / DSM 28221 / CCUG 30454 / Houston 1) (Rochalimaea henselae)).